A 928-amino-acid chain; its full sequence is MVKLSIVLTPQFLSHDQGQLTKELQQHVKSVTCPCEYLRKVINTLADHHHRGTDFGGSPWLHVIIAFPTSYKVVITLWIVYLWVSLLKTIFWSRNGHDGSTDVQQRAWRSNRRRQEGLRSICMHTKKRVSSFRGNKIGLKDVITLRRHVETKVRAKIRKRKVTTKINHHDKINGKRKTARKQKMFQRAQELRRRAEDYHKCKIPPSARKALCNWVRMAAAEHRHSSGLPYWPYLTAETLKNRMGHQPPPPTQQHSITDNSLSLKTPPECVLTPLPPSADDNLKTPPECVLTPLPPSADDNLKTPPECLLTPLPPSADDNLKTPPECLLTPLPPSADDNLKTPPECLLTPLPPSAPPSAPPSADDNLKTRAECLLHPLPPSADDNLKTPSERQLTPLPPSAPPSADDNIKTPAERLRGPLPPSADDNLKTPSERQLTPLPPSAPPSADDNIKTPAFHPQRMIISRHLPSVSSLPFHPQLHSQQMIISRYLLSVCGFRFHHQPMIISRHLPSVSSLPFHPQLHPQQMIISRHLPSVCGGRFHPQRMIISRHLPSVSSLPFHPQLHPQQMIISRHLPSVCGGRFHPQRMIISRHLPSVSSLPFHPQLHPQQMIISRHLPSVCGGRFHPQRMIISRHLPSVSSLPFHPQLHPQQMIISRHLPSVCGERLRGPLPPSADDNLKTPSERQLTPLPPSAPPSADDNIKTPAERLRGPLPPSADDNLKTPSERQLTPLPPSAPPSADDNIKTPAERLRGPLPPSADDNLKTPSERQLTPLPPSAPPSADDNIKTPAERLRGPLPPSADDNLKTPPLATQEAEAEKPRKPKRQRAAEMEPPPEPKRRRVGDVEPSRKPKRRRAADVEPSSPEPKRRRVGDVEPSRKPKRRRAADVEPSSPEPKRRRVGDVEPSRKPKRRRAADVEPSLPEPKRRRLS.

A helical membrane pass occupies residues Val-73 to Ser-93. 2 disordered regions span residues Arg-242–Thr-452 and Glu-663–Ser-928. Polar residues predominate over residues Gln-252–Leu-263. Residues Pro-349–Pro-359 are compositionally biased toward pro residues. Basic and acidic residues-rich tracts occupy residues Asp-406–Arg-416, Asp-698–Arg-708, Asp-740–Arg-750, and Asp-782–Arg-792.

It belongs to the NPIP family.

The protein resides in the membrane. This chain is Nuclear pore complex-interacting protein family member B12, found in Homo sapiens (Human).